Consider the following 237-residue polypeptide: MNRPGFPRFSVLIASLCGITLLSGCVAPTAKPNDPYYAPVLPRTPMSAASNNGAIYQAGFEQNLYGDRKAFRVGDIITITLSERMAASKAATSAMSKDSTNSIGLTSLFGSGLTTNNPIGGNDLSLSAGYNGARTTKGDGKAAQSNSLTGSVTVTVADVLPNGILSVRGEKWMTLNTGDELVRIAGLVRADDIATDNTVSSTRIADARITYSGTGAFADTSQPGWFDRFFLSPLFPF.

A signal peptide spans Met-1–Gly-24. Cys-25 is lipidated: N-palmitoyl cysteine. Cys-25 carries S-diacylglycerol cysteine lipidation.

This sequence belongs to the FlgH family. In terms of assembly, the basal body constitutes a major portion of the flagellar organelle and consists of four rings (L,P,S, and M) mounted on a central rod.

It localises to the cell outer membrane. It is found in the bacterial flagellum basal body. Assembles around the rod to form the L-ring and probably protects the motor/basal body from shearing forces during rotation. The chain is Flagellar L-ring protein from Pseudomonas syringae pv. tomato (strain ATCC BAA-871 / DC3000).